We begin with the raw amino-acid sequence, 377 residues long: tRNA 2-selenouridine synthase (377 aa).

The region spanning 18-141 (ITRGVTLIDV…LRQEAMDATD (124 aa)) is the Rhodanese domain. Catalysis depends on cysteine 101, which acts as the S-selanylcysteine intermediate.

This sequence belongs to the SelU family. In terms of assembly, monomer.

The enzyme catalyses 5-methylaminomethyl-2-thiouridine(34) in tRNA + selenophosphate + (2E)-geranyl diphosphate + H2O + H(+) = 5-methylaminomethyl-2-selenouridine(34) in tRNA + (2E)-thiogeraniol + phosphate + diphosphate. It catalyses the reaction 5-methylaminomethyl-2-thiouridine(34) in tRNA + (2E)-geranyl diphosphate = 5-methylaminomethyl-S-(2E)-geranyl-thiouridine(34) in tRNA + diphosphate. It carries out the reaction 5-methylaminomethyl-S-(2E)-geranyl-thiouridine(34) in tRNA + selenophosphate + H(+) = 5-methylaminomethyl-2-(Se-phospho)selenouridine(34) in tRNA + (2E)-thiogeraniol. The catalysed reaction is 5-methylaminomethyl-2-(Se-phospho)selenouridine(34) in tRNA + H2O = 5-methylaminomethyl-2-selenouridine(34) in tRNA + phosphate. Involved in the post-transcriptional modification of the uridine at the wobble position (U34) of tRNA(Lys), tRNA(Glu) and tRNA(Gln). Catalyzes the conversion of 2-thiouridine (S2U-RNA) to 2-selenouridine (Se2U-RNA). Acts in a two-step process involving geranylation of 2-thiouridine (S2U) to S-geranyl-2-thiouridine (geS2U) and subsequent selenation of the latter derivative to 2-selenouridine (Se2U) in the tRNA chain. This is tRNA 2-selenouridine synthase from Cronobacter sakazakii (strain ATCC BAA-894) (Enterobacter sakazakii).